A 365-amino-acid chain; its full sequence is Aspartate-semialdehyde dehydrogenase (365 aa).

Positions 12, 13, 14, 15, 37, 40, 85, and 86 each coordinate NADP(+). Cys156 (acyl-thioester intermediate) is an active-site residue. Residue Gly188 participates in NADP(+) binding. His256 serves as the catalytic Proton acceptor. Asn343 contributes to the NADP(+) binding site.

It belongs to the aspartate-semialdehyde dehydrogenase family. As to quaternary structure, homotetramer; dimer of dimers.

The protein localises to the cytoplasm. The protein resides in the cytosol. It localises to the nucleus. The enzyme catalyses L-aspartate 4-semialdehyde + phosphate + NADP(+) = 4-phospho-L-aspartate + NADPH + H(+). It participates in amino-acid biosynthesis; L-methionine biosynthesis via de novo pathway; L-homoserine from L-aspartate: step 2/3. The protein operates within amino-acid biosynthesis; L-threonine biosynthesis; L-threonine from L-aspartate: step 2/5. With respect to regulation, inhibited by the non-competitive inhibitors phthalaldehyde and naphthalene, the competitive inhibitor 1,4-benzoquinone and derivates such as 2-chloro-3-methoxy-1,4-naphthoquinone, 2,3-dichloro-1,4-naphthoquinone, 2-chloro-1,4-naphthoquinone, 2-bromo-1,4-naphthoquinone and 2,3-dichloro-5,8-dihydroxy-1,4-naphthoquinone, and 5-aminoisoquinoline. Inhibited by vinyl sulfones. In terms of biological role, catalyzes the NADPH-dependent formation of L-aspartate 4-semialdehyde (L-ASA) by the reductive dephosphorylation of 4-phospho-L-aspartate. Mediates the second step in the biosynthesis of amino acids that derive from aspartate (the aspartate family of amino acids), including methioinine and threonine, the latter of which is a precursor to isoleucine. The sequence is that of Aspartate-semialdehyde dehydrogenase from Candida albicans (strain SC5314 / ATCC MYA-2876) (Yeast).